We begin with the raw amino-acid sequence, 431 residues long: Adenylosuccinate synthetase (431 aa).

GTP contacts are provided by residues 13–19 (GDEGKGK) and 41–43 (GHT). D14 acts as the Proton acceptor in catalysis. Positions 14 and 41 each coordinate Mg(2+). Residues 14–17 (DEGK), 39–42 (NAGH), T130, R144, Q225, T240, and R304 each bind IMP. The active-site Proton donor is the H42. 300–306 (SVTGRPR) lines the substrate pocket. Residues R306, 332–334 (KLD), and 414–416 (STG) contribute to the GTP site.

Belongs to the adenylosuccinate synthetase family. In terms of assembly, homodimer. The cofactor is Mg(2+).

The protein localises to the cytoplasm. It catalyses the reaction IMP + L-aspartate + GTP = N(6)-(1,2-dicarboxyethyl)-AMP + GDP + phosphate + 2 H(+). It functions in the pathway purine metabolism; AMP biosynthesis via de novo pathway; AMP from IMP: step 1/2. Plays an important role in the de novo pathway of purine nucleotide biosynthesis. Catalyzes the first committed step in the biosynthesis of AMP from IMP. This chain is Adenylosuccinate synthetase, found in Bordetella avium (strain 197N).